A 957-amino-acid chain; its full sequence is AP2-associated protein kinase 1 (957 aa).

N-acetylmethionine is present on methionine 1. Residues 1-11 (MKKFFDSRREQ) are compositionally biased toward basic and acidic residues. The disordered stretch occupies residues 1–25 (MKKFFDSRREQGGSGLGSGSSGGGG). Gly residues predominate over residues 12 to 25 (GGSGLGSGSSGGGG). The residue at position 14 (serine 14) is a Phosphoserine. The Protein kinase domain occupies 46 to 315 (VTVDEVLAEG…QVSYFSFKLL (270 aa)). Residues 52-60 (LAEGGFAIV) and lysine 74 contribute to the ATP site. Residue aspartate 176 is the Proton acceptor of the active site. A Phosphotyrosine modification is found at tyrosine 234. Serine 235 carries the post-translational modification Phosphoserine. Disordered stretches follow at residues 326–506 (NSPI…AVHP) and 563–629 (TAAA…AGHR). Residues threonine 354 and threonine 389 each carry the phosphothreonine modification. Position 391 is an omega-N-methylarginine (arginine 391). Over residues 436 to 448 (PQAPPTSQQPPSA) the composition is skewed to pro residues. Phosphothreonine is present on threonine 441. 2 stretches are compositionally biased toward low complexity: residues 449–506 (PAQA…AVHP) and 563–601 (TAAA…KVQT). Position 602 is a phosphothreonine (threonine 602). Positions 607-617 (IQGQKLGSLTP) are enriched in polar residues. Phosphoserine is present on serine 614. A Phosphothreonine modification is found at threonine 616. Residues serine 619, serine 620, serine 633, and serine 646 each carry the phosphoserine modification. The residue at position 649 (threonine 649) is a Phosphothreonine. The tract at residues 660-697 (SLNKSKSATTTPSGSPRASQQNVYNPSEGSTWNPFDDD) is disordered. Residues 668-692 (TTTPSGSPRASQQNVYNPSEGSTWN) are compositionally biased toward polar residues. A Phosphotyrosine modification is found at tyrosine 683. Serine 727, serine 842, serine 933, and serine 934 each carry phosphoserine. A clathrin-binding domain (CBD) region spans residues 819-956 (EKADVAVESL…SLLLVDQLID (138 aa)). Disordered regions lie at residues 832–855 (LEPP…TDSL) and 919–941 (VLIT…ESSL). A compositionally biased stretch (polar residues) spans 840 to 855 (LPSQTESVTSNRTDSL). Over residues 927–940 (GGHSRNSSGSSESS) the composition is skewed to low complexity.

This sequence belongs to the protein kinase superfamily. Ser/Thr protein kinase family. As to quaternary structure, interacts (via CBD domain) with clathrin. Interacts with AP-2 complex. Interacts with NUMB. Interacts with alpha-adaptin. Interacts with EPS15 isoform 2. Interacts with membrane-bound activated NOTCH1 but not with the inactive full-length form of NOTCH1. Preferentially interacts with monoubiquitinated activated NOTCH1 compared to the non-ubiquitinated form. In terms of processing, autophosphorylated. In terms of tissue distribution, detected in brain (at protein level).

The protein resides in the cell membrane. It is found in the membrane. The protein localises to the clathrin-coated pit. Its subcellular location is the presynapse. The enzyme catalyses L-seryl-[protein] + ATP = O-phospho-L-seryl-[protein] + ADP + H(+). It catalyses the reaction L-threonyl-[protein] + ATP = O-phospho-L-threonyl-[protein] + ADP + H(+). Stimulated by clathrin. In terms of biological role, regulates clathrin-mediated endocytosis by phosphorylating the AP2M1/mu2 subunit of the adaptor protein complex 2 (AP-2) which ensures high affinity binding of AP-2 to cargo membrane proteins during the initial stages of endocytosis. Preferentially, may phosphorylate substrates on threonine residues. Regulates phosphorylation of other AP-2 subunits as well as AP-2 localization and AP-2-mediated internalization of ligand complexes. Phosphorylates NUMB and regulates its cellular localization, promoting NUMB localization to endosomes. Binds to and stabilizes the activated form of NOTCH1, increases its localization in endosomes and regulates its transcriptional activity. This Bos taurus (Bovine) protein is AP2-associated protein kinase 1 (AAK1).